The primary structure comprises 609 residues: Protein tesmin/TSO1-like CXC 3 (609 aa).

Basic and acidic residues predominate over residues 69 to 84; the sequence is ESRFRSQKDVSASKEV. 4 disordered regions span residues 69 to 102, 307 to 328, 457 to 477, and 569 to 609; these read ESRF…YKND, PISP…SSCK, LFEQ…KTQQ, and NSKR…TPHH. Residues 326–451 enclose the CRC domain; sequence SCKRCNCKKS…RCEGCKNAFG (126 aa). The segment covering 466–477 has biased composition (polar residues); sequence TSGTPGTKKTQQ.

The protein belongs to the lin-54 family. Ubiquitous but expressed mostly in flowers and at significant levels in leaves. Detected with highest levels in developing ovules and microspores, and in petals.

It localises to the nucleus. Plays a role in development of both male and female reproductive tissues. In Arabidopsis thaliana (Mouse-ear cress), this protein is Protein tesmin/TSO1-like CXC 3 (TCX3).